Reading from the N-terminus, the 354-residue chain is Methylthioribose-1-phosphate isomerase (354 aa).

Substrate is bound by residues 58–60 (RGA), arginine 101, and glutamine 204. Aspartate 245 functions as the Proton donor in the catalytic mechanism. Residue 255 to 256 (NK) coordinates substrate.

Belongs to the eIF-2B alpha/beta/delta subunits family. MtnA subfamily.

It carries out the reaction 5-(methylsulfanyl)-alpha-D-ribose 1-phosphate = 5-(methylsulfanyl)-D-ribulose 1-phosphate. The protein operates within amino-acid biosynthesis; L-methionine biosynthesis via salvage pathway; L-methionine from S-methyl-5-thio-alpha-D-ribose 1-phosphate: step 1/6. Catalyzes the interconversion of methylthioribose-1-phosphate (MTR-1-P) into methylthioribulose-1-phosphate (MTRu-1-P). This Xanthomonas axonopodis pv. citri (strain 306) protein is Methylthioribose-1-phosphate isomerase.